The chain runs to 371 residues: Spermatogenic leucine zipper protein 1 (371 aa).

2 coiled-coil regions span residues 96 to 148 (EVSE…TVQD) and 177 to 289 (FPHI…QKEE). The residue at position 98 (Ser98) is a Phosphoserine. A helix-loop-helix motif region spans residues 110–120 (INKELVKKLLA). The tract at residues 121-188 (SLDLGKKENA…HIQEENIRLR (68 aa)) is basic motif. Ser202 carries the post-translational modification Phosphoserine. Polar residues predominate over residues 223–240 (KTLKNNGTHSPTQTNNES). Residues 223-246 (KTLKNNGTHSPTQTNNESAKQELE) are disordered. Residues 245–266 (LEEQVKRLKEDTYSLHLIATLL) are leucine-zipper.

Phosphorylated by MAPK1/ERK2 and MAPK3/ERK1.

Its subcellular location is the cytoplasm. It is found in the nucleus. Its function is as follows. Transcription factor that binds to the DNA sequence 5'-CANNTG-3'(E box) and the G-box motif. May play an important role in the regulation of cell proliferation and differentiation during spermatogenesis. The protein is Spermatogenic leucine zipper protein 1 (SPZ1) of Bos taurus (Bovine).